The following is a 397-amino-acid chain: MNYAYPDEKGHYGIYGGRYVPETLMQSVLELEEAYKEAMQDEAFQKELNHYLKTYVGRETPLYFAENMTKYCGGAKIYLKREDLNHTGAHKINNTIGQALLAVRMGKKKVVAETGAGQHGVATATVCALLGLECVIFMGEEDVRRQKLNVFRMELLGAKVESVAAGSGTLKDAVNEALRYWVSHVHDTHYIMGSVLGPHPFPQIVRDFQSVIGNETKKQYEALEGKLPEAVVACIGGGSNAMGMFYPFVHDEEVALYGVEAAGKGVHTEKHAATLTKGSVGVLHGSMMYLLQNEEGQIQEAHSISAGLDYPGVGPEHSLLKDIGRVSYHSITDDEALEAFQLLTKKEGIIPALESSHAVAYALKLAPKMKKDEGLVICLSGRGDKDVESIKRYMEEV.

Lys-91 is subject to N6-(pyridoxal phosphate)lysine.

The protein belongs to the TrpB family. In terms of assembly, tetramer of two alpha and two beta chains. It depends on pyridoxal 5'-phosphate as a cofactor.

It carries out the reaction (1S,2R)-1-C-(indol-3-yl)glycerol 3-phosphate + L-serine = D-glyceraldehyde 3-phosphate + L-tryptophan + H2O. The protein operates within amino-acid biosynthesis; L-tryptophan biosynthesis; L-tryptophan from chorismate: step 5/5. Its function is as follows. The beta subunit is responsible for the synthesis of L-tryptophan from indole and L-serine. This Bacillus cereus (strain G9842) protein is Tryptophan synthase beta chain.